We begin with the raw amino-acid sequence, 400 residues long: Mu-type opioid receptor (400 aa).

Over 1–68 the chain is Extracellular; it reads MDSSAVPTNA…CPPTGSPSMI (68 aa). 5 N-linked (GlcNAc...) asparagine glycosylation sites follow: N9, N12, N33, N40, and N48. Residues 69–93 traverse the membrane as a helical segment; it reads TAITIMALYSIVCVVGLFGNFLVMY. The Cytoplasmic portion of the chain corresponds to 94–106; it reads VIVRYTKMKTATN. A helical membrane pass occupies residues 107–131; the sequence is IYIFNLALADALVTSTLPFQSVNYL. The Extracellular portion of the chain corresponds to 132–142; it reads MGTWPFGTILC. A disulfide bond links C142 and C219. Residues 143–165 traverse the membrane as a helical segment; it reads KIVISIDYYNMSTSIFTLCTMSV. Topologically, residues 166 to 185 are cytoplasmic; that stretch reads DRYIAVCHPVKALDFRTPRN. Phosphotyrosine is present on Y168. The chain crosses the membrane as a helical span at residues 186-207; it reads AKIINVCNWILSSAIGLPVMFM. At 208–230 the chain is on the extracellular side; it reads ATTKYRQGSIDCTLTFSHPSWYW. The helical transmembrane segment at 231–255 threads the bilayer; sequence ENLLKICVFIFAFIMPVLIITVCYG. The Cytoplasmic segment spans residues 256-283; sequence LMILRLKSVRMLSGSKEKDRNLRRITRM. A helical membrane pass occupies residues 284–306; sequence VLVVVAVFIICWTPIHIYVIIKA. The Extracellular portion of the chain corresponds to 307–314; the sequence is LVTIPETT. The helical transmembrane segment at 315 to 338 threads the bilayer; sequence FQTVSWHFCIALGYTNSCLNPVLY. The NPxxY; plays a role in stabilizing the activated conformation of the receptor signature appears at 334–338; it reads NPVLY. Topologically, residues 339-400 are cytoplasmic; it reads AFLDEDFKRC…NLEAETAPLP (62 aa). C353 carries the S-palmitoyl cysteine lipid modification. Residues 364 to 386 form a disordered region; the sequence is NSTRIRQNTRDHPSTANTVDRTN. At S365 the chain carries Phosphoserine. T372 carries the phosphothreonine modification. Phosphoserine is present on S377. T396 is subject to Phosphothreonine.

Belongs to the G-protein coupled receptor 1 family. Forms homooligomers and heterooligomers with other GPCRs, such as OPRD1, OPRK1, OPRL1, NPFFR2, ADRA2A, SSTR2, CNR1 and CCR5 (probably in dimeric forms). Interacts with heterotrimeric G proteins; interaction with a heterotrimeric complex containing GNAI1, GNB1 and GNG2 stabilizes the active conformation of the receptor and increases its affinity for endomorphin-2, the synthetic opioid peptide DAMGO and for morphinan agonists. Interacts with PPL; the interaction disrupts agonist-mediated G-protein activation. Interacts (via C-terminus) with DNAJB4 (via C-terminus). Interacts with calmodulin; the interaction inhibits the constitutive activity of OPRM1; it abolishes basal and attenuates agonist-stimulated G-protein coupling. Interacts with FLNA, PLD2, RANBP9 and WLS and GPM6A. Interacts with RTP4. Interacts with SYP and GNAS. Interacts with RGS9, RGS17, RGS20, RGS4, PPP1R9B and HINT1. In terms of processing, phosphorylated. Differentially phosphorylated in basal and agonist-induced conditions. Agonist-mediated phosphorylation modulates receptor internalization. Phosphorylated by GRK2 in a agonist-dependent manner. Phosphorylation at Tyr-168 requires receptor activation, is dependent on non-receptor protein tyrosine kinase Src and results in a decrease in agonist efficacy by reducing G-protein coupling efficiency. Phosphorylated on tyrosine residues; the phosphorylation is involved in agonist-induced G-protein-independent receptor down-regulation. Phosphorylation at Ser-377 is involved in G-protein-dependent but not beta-arrestin-dependent activation of the ERK pathway. Ubiquitinated. A basal ubiquitination seems not to be related to degradation. Ubiquitination is increased upon formation of OPRM1:OPRD1 oligomers leading to proteasomal degradation; the ubiquitination is diminished by RTP4.

Its subcellular location is the cell membrane. The protein localises to the cell projection. It is found in the axon. The protein resides in the perikaryon. It localises to the dendrite. Its subcellular location is the endosome. Functionally, receptor for endogenous opioids such as beta-endorphin and endomorphin. Receptor for natural and synthetic opioids including morphine, heroin, DAMGO, fentanyl, etorphine, buprenorphin and methadone. Also activated by enkephalin peptides, such as Met-enkephalin or Met-enkephalin-Arg-Phe, with higher affinity for Met-enkephalin-Arg-Phe. Agonist binding to the receptor induces coupling to an inactive GDP-bound heterotrimeric G-protein complex and subsequent exchange of GDP for GTP in the G-protein alpha subunit leading to dissociation of the G-protein complex with the free GTP-bound G-protein alpha and the G-protein beta-gamma dimer activating downstream cellular effectors. The agonist- and cell type-specific activity is predominantly coupled to pertussis toxin-sensitive G(i) and G(o) G alpha proteins, GNAI1, GNAI2, GNAI3 and GNAO1, and to a lesser extent to pertussis toxin-insensitive G alpha proteins GNAZ and GNA15. They mediate an array of downstream cellular responses, including inhibition of adenylate cyclase activity and both N-type and L-type calcium channels, activation of inward rectifying potassium channels, mitogen-activated protein kinase (MAPK), phospholipase C (PLC), phosphoinositide/protein kinase (PKC), phosphoinositide 3-kinase (PI3K) and regulation of NF-kappa-B. Also couples to adenylate cyclase stimulatory G alpha proteins. The selective temporal coupling to G-proteins and subsequent signaling can be regulated by RGSZ proteins, such as RGS9, RGS17 and RGS4. Phosphorylation by members of the GPRK subfamily of Ser/Thr protein kinases and association with beta-arrestins is involved in short-term receptor desensitization. Beta-arrestins associate with the GPRK-phosphorylated receptor and uncouple it from the G-protein thus terminating signal transduction. The phosphorylated receptor is internalized through endocytosis via clathrin-coated pits which involves beta-arrestins. The activation of the ERK pathway occurs either in a G-protein-dependent or a beta-arrestin-dependent manner and is regulated by agonist-specific receptor phosphorylation. Acts as a class A G-protein coupled receptor (GPCR) which dissociates from beta-arrestin at or near the plasma membrane and undergoes rapid recycling. Receptor down-regulation pathways are varying with the agonist and occur dependent or independent of G-protein coupling. Endogenous ligands induce rapid desensitization, endocytosis and recycling. Heterooligomerization with other GPCRs can modulate agonist binding, signaling and trafficking properties. Involved in neurogenesis. The sequence is that of Mu-type opioid receptor (OPRM1) from Macaca mulatta (Rhesus macaque).